A 122-amino-acid chain; its full sequence is Ribosome-binding factor A (122 aa).

Belongs to the RbfA family. In terms of assembly, monomer. Binds 30S ribosomal subunits, but not 50S ribosomal subunits or 70S ribosomes.

Its subcellular location is the cytoplasm. One of several proteins that assist in the late maturation steps of the functional core of the 30S ribosomal subunit. Associates with free 30S ribosomal subunits (but not with 30S subunits that are part of 70S ribosomes or polysomes). Required for efficient processing of 16S rRNA. May interact with the 5'-terminal helix region of 16S rRNA. The chain is Ribosome-binding factor A from Dichelobacter nodosus (strain VCS1703A).